A 181-amino-acid chain; its full sequence is Extracellular superoxide dismutase [Cu-Zn] (181 aa).

A signal peptide spans 1-18 (MMQYLVVSLALCATICSA). An N-linked (GlcNAc...) asparagine glycan is attached at asparagine 46. Histidine 75, histidine 77, and histidine 92 together coordinate Cu cation. Residues cysteine 86 and cysteine 175 are joined by a disulfide bond. Residues histidine 92, histidine 100, histidine 109, and aspartate 112 each contribute to the Zn(2+) site. N-linked (GlcNAc...) asparagine glycosylation is present at asparagine 119. Histidine 149 lines the Cu cation pocket. N-linked (GlcNAc...) asparagine glycosylation occurs at asparagine 159.

The protein belongs to the Cu-Zn superoxide dismutase family. It depends on Cu cation as a cofactor. The cofactor is Zn(2+). As to expression, expressed at higher levels in females compared to males.

It localises to the secreted. The catalysed reaction is 2 superoxide + 2 H(+) = H2O2 + O2. Protects the extracellular space from the toxic effects of reactive oxygen intermediates by converting superoxide radicals into hydrogen peroxide and oxygen. The polypeptide is Extracellular superoxide dismutase [Cu-Zn] (Drosophila melanogaster (Fruit fly)).